The primary structure comprises 462 residues: ATP synthase subunit beta (462 aa).

An ATP-binding site is contributed by 151–158 (GGAGVGKT).

This sequence belongs to the ATPase alpha/beta chains family. As to quaternary structure, F-type ATPases have 2 components, CF(1) - the catalytic core - and CF(0) - the membrane proton channel. CF(1) has five subunits: alpha(3), beta(3), gamma(1), delta(1), epsilon(1). CF(0) has four main subunits: a(1), b(1), b'(1) and c(9-12).

It is found in the cell inner membrane. It catalyses the reaction ATP + H2O + 4 H(+)(in) = ADP + phosphate + 5 H(+)(out). Its function is as follows. Produces ATP from ADP in the presence of a proton gradient across the membrane. The catalytic sites are hosted primarily by the beta subunits. This is ATP synthase subunit beta from Chlorobium phaeobacteroides (strain BS1).